The sequence spans 274 residues: Large ribosomal subunit protein uL2 (274 aa).

2 disordered regions span residues 28–55 and 224–274; these read APHAPLIEKKSKSGGRNNNGRITTRHVG and VAMN…RRRK.

This sequence belongs to the universal ribosomal protein uL2 family. In terms of assembly, part of the 50S ribosomal subunit. Forms a bridge to the 30S subunit in the 70S ribosome.

Its function is as follows. One of the primary rRNA binding proteins. Required for association of the 30S and 50S subunits to form the 70S ribosome, for tRNA binding and peptide bond formation. It has been suggested to have peptidyltransferase activity; this is somewhat controversial. Makes several contacts with the 16S rRNA in the 70S ribosome. The sequence is that of Large ribosomal subunit protein uL2 from Pseudomonas putida (strain ATCC 47054 / DSM 6125 / CFBP 8728 / NCIMB 11950 / KT2440).